Reading from the N-terminus, the 249-residue chain is Adenylate kinase (249 aa).

G43–T48 is a binding site for ATP. An NMP region spans residues A63 to V92. Residues T64, R69, G90–V92, G119–R122, and Q126 contribute to the AMP site. The interval G160–D197 is LID. Residues R161 and S170–Y171 each bind ATP. AMP-binding residues include R194 and R205. Residue Q233 participates in ATP binding.

The protein belongs to the adenylate kinase family. AK2 subfamily. Monomer.

The protein resides in the cytoplasm. The protein localises to the cytosol. Its subcellular location is the mitochondrion intermembrane space. The catalysed reaction is AMP + ATP = 2 ADP. In terms of biological role, catalyzes the reversible transfer of the terminal phosphate group between ATP and AMP. Plays an important role in cellular energy homeostasis and in adenine nucleotide metabolism. Adenylate kinase activity is critical for regulation of the phosphate utilization and the AMP de novo biosynthesis pathways. The polypeptide is Adenylate kinase (Scheffersomyces stipitis (strain ATCC 58785 / CBS 6054 / NBRC 10063 / NRRL Y-11545) (Yeast)).